The sequence spans 652 residues: Acetyl-coenzyme A synthetase (652 aa).

CoA contacts are provided by residues 191–194 (RAGR), Thr311, and Asn335. Residues 387-389 (GEP), 411-416 (DTWWQT), Asp500, and Arg515 each bind ATP. Ser523 is a binding site for CoA. Residue Arg526 participates in ATP binding. Mg(2+)-binding residues include Val537, His539, and Ile542. Arg584 is a CoA binding site. N6-acetyllysine; by Pat is present on Lys609.

This sequence belongs to the ATP-dependent AMP-binding enzyme family. Monomer. Mg(2+) serves as cofactor. In terms of processing, acetylated. Deacetylation by the SIR2-homolog deacetylase activates the enzyme.

The enzyme catalyses acetate + ATP + CoA = acetyl-CoA + AMP + diphosphate. Functionally, catalyzes the conversion of acetate into acetyl-CoA (AcCoA), an essential intermediate at the junction of anabolic and catabolic pathways. Acs undergoes a two-step reaction. In the first half reaction, Acs combines acetate with ATP to form acetyl-adenylate (AcAMP) intermediate. In the second half reaction, it can then transfer the acetyl group from AcAMP to the sulfhydryl group of CoA, forming the product AcCoA. Required for acetate recapture but not for acetate excretion when this organism is grown on ethanolamine. Enables the cell to use acetate during aerobic growth to generate energy via the TCA cycle, and biosynthetic compounds via the glyoxylate shunt. Acetylates CheY, the response regulator involved in flagellar movement and chemotaxis. The polypeptide is Acetyl-coenzyme A synthetase (Salmonella typhimurium (strain LT2 / SGSC1412 / ATCC 700720)).